Here is a 310-residue protein sequence, read N- to C-terminus: Probable metallo-hydrolase Mb2322c (310 aa).

The interval 1 to 29 is disordered; that stretch reads MVATRGRPCPTNFSRPQRPRVAGNGTKSQ. Residues histidine 137, aspartate 139, aspartate 141, histidine 142, histidine 221, aspartate 242, and histidine 288 each coordinate Zn(2+).

Belongs to the metallo-beta-lactamase superfamily. The cofactor is Zn(2+).

The polypeptide is Probable metallo-hydrolase Mb2322c (Mycobacterium bovis (strain ATCC BAA-935 / AF2122/97)).